We begin with the raw amino-acid sequence, 962 residues long: Glycine dehydrogenase (decarboxylating) (962 aa).

Residue lysine 709 is modified to N6-(pyridoxal phosphate)lysine.

This sequence belongs to the GcvP family. The glycine cleavage system is composed of four proteins: P, T, L and H. Pyridoxal 5'-phosphate serves as cofactor.

It carries out the reaction N(6)-[(R)-lipoyl]-L-lysyl-[glycine-cleavage complex H protein] + glycine + H(+) = N(6)-[(R)-S(8)-aminomethyldihydrolipoyl]-L-lysyl-[glycine-cleavage complex H protein] + CO2. Its function is as follows. The glycine cleavage system catalyzes the degradation of glycine. The P protein binds the alpha-amino group of glycine through its pyridoxal phosphate cofactor; CO(2) is released and the remaining methylamine moiety is then transferred to the lipoamide cofactor of the H protein. The chain is Glycine dehydrogenase (decarboxylating) from Shewanella putrefaciens (strain CN-32 / ATCC BAA-453).